Reading from the N-terminus, the 693-residue chain is Polyribonucleotide nucleotidyltransferase (693 aa).

Residues aspartate 489 and aspartate 495 each coordinate Mg(2+). In terms of domain architecture, KH spans 556-615; the sequence is PQIHIMNVNPAKIKDVVGRGGSVVKGIVEKTGAQIDTSDSGEVKIFAKDKRSLDLAKSMV. Residues 625-693 enclose the S1 motif domain; sequence GQIYKGKIVK…GRVKLSLVAR (69 aa).

Belongs to the polyribonucleotide nucleotidyltransferase family. Component of the RNA degradosome, which is a multiprotein complex involved in RNA processing and mRNA degradation. Mg(2+) serves as cofactor.

It localises to the cytoplasm. The enzyme catalyses RNA(n+1) + phosphate = RNA(n) + a ribonucleoside 5'-diphosphate. Involved in mRNA degradation. Catalyzes the phosphorolysis of single-stranded polyribonucleotides processively in the 3'- to 5'-direction. In Francisella philomiragia subsp. philomiragia (strain ATCC 25017 / CCUG 19701 / FSC 153 / O#319-036), this protein is Polyribonucleotide nucleotidyltransferase.